The following is a 326-amino-acid chain: 4-hydroxy-3-methylbut-2-enyl diphosphate reductase (326 aa).

Cysteine 22 lines the [4Fe-4S] cluster pocket. Residues histidine 51 and histidine 84 each coordinate (2E)-4-hydroxy-3-methylbut-2-enyl diphosphate. Histidine 51 and histidine 84 together coordinate dimethylallyl diphosphate. Isopentenyl diphosphate is bound by residues histidine 51 and histidine 84. [4Fe-4S] cluster is bound at residue cysteine 106. Residue histidine 134 participates in (2E)-4-hydroxy-3-methylbut-2-enyl diphosphate binding. Histidine 134 serves as a coordination point for dimethylallyl diphosphate. Histidine 134 contacts isopentenyl diphosphate. Catalysis depends on glutamate 136, which acts as the Proton donor. Threonine 174 is a binding site for (2E)-4-hydroxy-3-methylbut-2-enyl diphosphate. Residue cysteine 204 participates in [4Fe-4S] cluster binding. (2E)-4-hydroxy-3-methylbut-2-enyl diphosphate contacts are provided by serine 232, serine 233, asparagine 234, and serine 276. The dimethylallyl diphosphate site is built by serine 232, serine 233, asparagine 234, and serine 276. Serine 232, serine 233, asparagine 234, and serine 276 together coordinate isopentenyl diphosphate.

This sequence belongs to the IspH family. [4Fe-4S] cluster is required as a cofactor.

It catalyses the reaction isopentenyl diphosphate + 2 oxidized [2Fe-2S]-[ferredoxin] + H2O = (2E)-4-hydroxy-3-methylbut-2-enyl diphosphate + 2 reduced [2Fe-2S]-[ferredoxin] + 2 H(+). The enzyme catalyses dimethylallyl diphosphate + 2 oxidized [2Fe-2S]-[ferredoxin] + H2O = (2E)-4-hydroxy-3-methylbut-2-enyl diphosphate + 2 reduced [2Fe-2S]-[ferredoxin] + 2 H(+). It participates in isoprenoid biosynthesis; dimethylallyl diphosphate biosynthesis; dimethylallyl diphosphate from (2E)-4-hydroxy-3-methylbutenyl diphosphate: step 1/1. It functions in the pathway isoprenoid biosynthesis; isopentenyl diphosphate biosynthesis via DXP pathway; isopentenyl diphosphate from 1-deoxy-D-xylulose 5-phosphate: step 6/6. Functionally, catalyzes the conversion of 1-hydroxy-2-methyl-2-(E)-butenyl 4-diphosphate (HMBPP) into a mixture of isopentenyl diphosphate (IPP) and dimethylallyl diphosphate (DMAPP). Acts in the terminal step of the DOXP/MEP pathway for isoprenoid precursor biosynthesis. This chain is 4-hydroxy-3-methylbut-2-enyl diphosphate reductase, found in Bordetella bronchiseptica (strain ATCC BAA-588 / NCTC 13252 / RB50) (Alcaligenes bronchisepticus).